A 201-amino-acid chain; its full sequence is Large ribosomal subunit protein uL4 (201 aa).

Residues 45–71 are disordered; that stretch reads AQKTRAEVTGSGKKPWRQKGTGRARAG.

The protein belongs to the universal ribosomal protein uL4 family. As to quaternary structure, part of the 50S ribosomal subunit.

Its function is as follows. One of the primary rRNA binding proteins, this protein initially binds near the 5'-end of the 23S rRNA. It is important during the early stages of 50S assembly. It makes multiple contacts with different domains of the 23S rRNA in the assembled 50S subunit and ribosome. Forms part of the polypeptide exit tunnel. The polypeptide is Large ribosomal subunit protein uL4 (Shewanella pealeana (strain ATCC 700345 / ANG-SQ1)).